The chain runs to 283 residues: Pantothenate synthetase (283 aa).

34–41 (MGALHDGH) serves as a coordination point for ATP. His-41 functions as the Proton donor in the catalytic mechanism. Position 65 (Gln-65) interacts with (R)-pantoate. Residue Gln-65 participates in beta-alanine binding. 152–155 (GQKD) contacts ATP. Residue Gln-158 coordinates (R)-pantoate. Residues Val-181 and 189–192 (MSSR) contribute to the ATP site.

It belongs to the pantothenate synthetase family. As to quaternary structure, homodimer.

It localises to the cytoplasm. The enzyme catalyses (R)-pantoate + beta-alanine + ATP = (R)-pantothenate + AMP + diphosphate + H(+). The protein operates within cofactor biosynthesis; (R)-pantothenate biosynthesis; (R)-pantothenate from (R)-pantoate and beta-alanine: step 1/1. Its function is as follows. Catalyzes the condensation of pantoate with beta-alanine in an ATP-dependent reaction via a pantoyl-adenylate intermediate. The polypeptide is Pantothenate synthetase (Nitrobacter hamburgensis (strain DSM 10229 / NCIMB 13809 / X14)).